A 428-amino-acid polypeptide reads, in one-letter code: Threonine synthase (428 aa).

K107 is modified (N6-(pyridoxal phosphate)lysine).

This sequence belongs to the threonine synthase family. The cofactor is pyridoxal 5'-phosphate.

The catalysed reaction is O-phospho-L-homoserine + H2O = L-threonine + phosphate. Its pathway is amino-acid biosynthesis; L-threonine biosynthesis; L-threonine from L-aspartate: step 5/5. With respect to regulation, is competitively inhibited by L-threo-3-hydroxyhomoserine phosphate. Functionally, catalyzes the gamma-elimination of phosphate from L-phosphohomoserine and the beta-addition of water to produce L-threonine. To a lesser extent, is able to slowly catalyze the deamination of L-threonine into alpha-ketobutyrate and that of L-serine and 3-chloroalanine into pyruvate. Is also able to rapidly convert vinylglycine to threonine, which proves that the pyridoxal p-quinonoid of vinylglycine is an intermediate in the TS reaction. This is Threonine synthase (thrC) from Escherichia coli (strain K12).